Here is an 860-residue protein sequence, read N- to C-terminus: Spindle and centriole-associated protein 1 (860 aa).

3 disordered regions span residues 160–200 (ESVI…SQSN), 232–254 (QSQMTASSGTPSSASPSGEQKAA), and 293–330 (KQLLNKVKRKPDSRAPSKQKSSMLSASTASTDLPSSSN). Residue Thr-236 is modified to Phosphothreonine. A compositionally biased stretch (low complexity) spans 236–249 (TASSGTPSSASPSG). The span at 308–330 (PSKQKSSMLSASTASTDLPSSSN) shows a compositional bias: polar residues. Residues 383 to 437 (RYLKESELQLRKEVETRQRLEEALGDHRELIDALTAEVLFLREENTATQARLQQY) are a coiled coil. The residue at position 646 (Ser-646) is a Phosphoserine. Positions 729–755 (SSMEERIAELNRQSMEARGKLLQLIEQ) form a coiled coil. Residues Ser-765, Ser-769, and Ser-824 each carry the phosphoserine modification. The interval 790-860 (IPGAEAPESS…GWFALSTHVS (71 aa)) is disordered. A compositionally biased stretch (low complexity) spans 808-824 (SGLNSRRSSGAASNSCS).

As to quaternary structure, interacts with CEP120.

Its subcellular location is the cytoplasm. It is found in the cytoskeleton. The protein localises to the microtubule organizing center. It localises to the centrosome. The protein resides in the centriole. Its subcellular location is the spindle. Its function is as follows. Regulator required for centriole duplication. for proper bipolar spindle formation and chromosome congression in mitosis. This chain is Spindle and centriole-associated protein 1 (SPICE1), found in Bos taurus (Bovine).